The following is a 318-amino-acid chain: Ribosomal RNA small subunit methyltransferase A (318 aa).

Asparagine 40, valine 42, glycine 67, glutamate 88, aspartate 118, and asparagine 137 together coordinate S-adenosyl-L-methionine. Over residues 296–305 the composition is skewed to basic and acidic residues; sequence ADRGGSDREG. The tract at residues 296–318 is disordered; it reads ADRGGSDREGTSPPTAGQGAPAC.

The protein belongs to the class I-like SAM-binding methyltransferase superfamily. rRNA adenine N(6)-methyltransferase family. RsmA subfamily.

Its subcellular location is the cytoplasm. The enzyme catalyses adenosine(1518)/adenosine(1519) in 16S rRNA + 4 S-adenosyl-L-methionine = N(6)-dimethyladenosine(1518)/N(6)-dimethyladenosine(1519) in 16S rRNA + 4 S-adenosyl-L-homocysteine + 4 H(+). Its function is as follows. Specifically dimethylates two adjacent adenosines (A1518 and A1519) in the loop of a conserved hairpin near the 3'-end of 16S rRNA in the 30S particle. May play a critical role in biogenesis of 30S subunits. This is Ribosomal RNA small subunit methyltransferase A from Mycobacterium avium (strain 104).